Here is a 208-residue protein sequence, read N- to C-terminus: ATP synthase subunit b (208 aa).

The span at Met1–Ser18 shows a compositional bias: polar residues. Positions Met1 to Ala26 are disordered. Residues Ser56 to Pro78 form a helical membrane-spanning segment.

The protein belongs to the ATPase B chain family. In terms of assembly, F-type ATPases have 2 components, F(1) - the catalytic core - and F(0) - the membrane proton channel. F(1) has five subunits: alpha(3), beta(3), gamma(1), delta(1), epsilon(1). F(0) has three main subunits: a(1), b(2) and c(10-14). The alpha and beta chains form an alternating ring which encloses part of the gamma chain. F(1) is attached to F(0) by a central stalk formed by the gamma and epsilon chains, while a peripheral stalk is formed by the delta and b chains.

It localises to the cell inner membrane. Functionally, f(1)F(0) ATP synthase produces ATP from ADP in the presence of a proton or sodium gradient. F-type ATPases consist of two structural domains, F(1) containing the extramembraneous catalytic core and F(0) containing the membrane proton channel, linked together by a central stalk and a peripheral stalk. During catalysis, ATP synthesis in the catalytic domain of F(1) is coupled via a rotary mechanism of the central stalk subunits to proton translocation. Component of the F(0) channel, it forms part of the peripheral stalk, linking F(1) to F(0). The chain is ATP synthase subunit b from Brucella melitensis biotype 1 (strain ATCC 23456 / CCUG 17765 / NCTC 10094 / 16M).